The chain runs to 524 residues: MISPFLVLAIGTCLTNSLVPEKEKDPKYWRDQAQETLKYALELQKLNTNVAKNVIMFLGDGMGVSTVTAARILKGQLHHNPGEETRLEMDKFPFVALSKTYNTNAQVPDSAGTATAYLCGVKANEGTVGVSAATERSRCNTTQGNEVTSILRWAKDAGKSVGIVTTTRVNHATPSAAYAHSADRDWYSDNEMPPEALSQGCKDIAYQLMHNIRDIDVIMGGGRKYMYPKNKTDVEYESDEKARGTRLDGLDLVDTWKSFKPRYKHSHFIWNRTELLTLDPHNVDYLLGLFEPGDMQYELNRNNVTDPSLSEMVVVAIQILRKNPKGFFLLVEGGRIDHGHHEGKAKQALHEAVEMDRAIGQAGSLTSSEDTLTVVTADHSHVFTFGGYTPRGNSIFGLAPMLSDTDKKPFTAILYGNGPGYKVVGGERENVSMVDYAHNNYQAQSAVPLRHETHGGEDVAVFSKGPMAHLLHGVHEQNYVPHVMAYAACIGANLGHCAPASSAGSLAAGPLLLALALYPLSVLF.

An N-terminal signal peptide occupies residues 1–17 (MISPFLVLAIGTCLTNS). A Mg(2+)-binding site is contributed by D60. Residues D60 and S110 each coordinate Zn(2+). Catalysis depends on S110, which acts as the Phosphoserine intermediate. S110 is subject to Phosphoserine. C139 and C201 are joined by a disulfide. N140 carries an N-linked (GlcNAc...) asparagine glycan. T173 lines the Mg(2+) pocket. N230 carries N-linked (GlcNAc...) asparagine glycosylation. E235 contacts Ca(2+). The N-linked (GlcNAc...) asparagine glycan is linked to N271. The Ca(2+) site is built by F290 and E291. The N-linked (GlcNAc...) asparagine glycan is linked to N303. D306 lines the Ca(2+) pocket. E332 is a Mg(2+) binding site. Residues D337, H341, D378, and H379 each contribute to the Zn(2+) site. An N-linked (GlcNAc...) asparagine glycan is attached at N430. H454 lines the Zn(2+) pocket. C489 and C497 form a disulfide bridge. S501 carries the GPI-anchor amidated serine lipid modification. A propeptide spans 502–524 (SAGSLAAGPLLLALALYPLSVLF) (removed in mature form).

Belongs to the alkaline phosphatase family. Homodimer. Requires Mg(2+) as cofactor. Zn(2+) serves as cofactor. The cofactor is Ca(2+). N-glycosylated.

Its subcellular location is the cell membrane. It localises to the extracellular vesicle membrane. It is found in the mitochondrion membrane. The protein localises to the mitochondrion intermembrane space. It carries out the reaction a phosphate monoester + H2O = an alcohol + phosphate. The enzyme catalyses diphosphate + H2O = 2 phosphate + H(+). It catalyses the reaction pyridoxal 5'-phosphate + H2O = pyridoxal + phosphate. The catalysed reaction is phosphoethanolamine + H2O = ethanolamine + phosphate. It carries out the reaction N-phosphocreatine + H2O = creatine + phosphate. The enzyme catalyses ATP + H2O = ADP + phosphate + H(+). It catalyses the reaction ADP + H2O = AMP + phosphate + H(+). The catalysed reaction is AMP + H2O = adenosine + phosphate. With respect to regulation, phosphatase activity is specifically inhibited by 5-((5-chloro-2-methoxyphenyl)sulfonamido)nicotinamide (SBI-425). Functionally, alkaline phosphatase that metabolizes various phosphate compounds and plays a key role in skeletal mineralization and adaptive thermogenesis. Has broad substrate specificity and can hydrolyze a considerable variety of compounds: however, only a few substrates, such as diphosphate (inorganic pyrophosphate; PPi), pyridoxal 5'-phosphate (PLP) and N-phosphocreatine are natural substrates. Plays an essential role in skeletal and dental mineralization via its ability to hydrolyze extracellular diphosphate, a potent mineralization inhibitor, to phosphate: it thereby promotes hydroxyapatite crystal formation and increases inorganic phosphate concentration. Acts in a non-redundant manner with PHOSPHO1 in skeletal mineralization: while PHOSPHO1 mediates the initiation of hydroxyapatite crystallization in the matrix vesicles (MVs), ALPL/TNAP catalyzes the spread of hydroxyapatite crystallization in the extracellular matrix. Also promotes dephosphorylation of osteopontin (SSP1), an inhibitor of hydroxyapatite crystallization in its phosphorylated state; it is however unclear whether ALPL/TNAP mediates SSP1 dephosphorylation via a direct or indirect manner. Catalyzes dephosphorylation of PLP to pyridoxal (PL), the transportable form of vitamin B6, in order to provide a sufficient amount of PLP in the brain, an essential cofactor for enzymes catalyzing the synthesis of diverse neurotransmitters. Additionally, also able to mediate ATP degradation in a stepwise manner to adenosine, thereby regulating the availability of ligands for purinergic receptors. Also capable of dephosphorylating microbial products, such as lipopolysaccharides (LPS) as well as other phosphorylated small-molecules, such as poly-inosine:cytosine (poly I:C). Acts as a key regulator of adaptive thermogenesis as part of the futile creatine cycle: localizes to the mitochondria of thermogenic fat cells and acts by mediating hydrolysis of N-phosphocreatine to initiate a futile cycle of creatine dephosphorylation and phosphorylation. During the futile creatine cycle, creatine and N-phosphocreatine are in a futile cycle, which dissipates the high energy charge of N-phosphocreatine as heat without performing any mechanical or chemical work. The protein is Alkaline phosphatase, tissue-nonspecific isozyme of Homo sapiens (Human).